The following is a 210-amino-acid chain: Large ribosomal subunit protein uL4 (210 aa).

Residues 41–52 show a composition bias toward polar residues; sequence QTNARQGTASTK. Residues 41 to 71 are disordered; sequence QTNARQGTASTKTRAEVRGGGRKPWRQKGTG. Positions 60–71 are enriched in basic residues; that stretch reads GGRKPWRQKGTG.

The protein belongs to the universal ribosomal protein uL4 family. As to quaternary structure, part of the 50S ribosomal subunit.

Functionally, one of the primary rRNA binding proteins, this protein initially binds near the 5'-end of the 23S rRNA. It is important during the early stages of 50S assembly. It makes multiple contacts with different domains of the 23S rRNA in the assembled 50S subunit and ribosome. In terms of biological role, forms part of the polypeptide exit tunnel. This Trichormus variabilis (strain ATCC 29413 / PCC 7937) (Anabaena variabilis) protein is Large ribosomal subunit protein uL4.